Consider the following 254-residue polypeptide: Small ribosomal subunit protein uS2 (254 aa).

This sequence belongs to the universal ribosomal protein uS2 family.

The chain is Small ribosomal subunit protein uS2 from Borrelia hermsii (strain HS1 / DAH).